Reading from the N-terminus, the 476-residue chain is Ribulose bisphosphate carboxylase large chain (476 aa).

Residues 1–2 (MS) constitute a propeptide that is removed on maturation. The residue at position 3 (P3) is an N-acetylproline. An N6,N6,N6-trimethyllysine modification is found at K14. Substrate contacts are provided by N123 and T173. K175 serves as the catalytic Proton acceptor. Residue K177 coordinates substrate. Residues K201, D203, and E204 each coordinate Mg(2+). The residue at position 201 (K201) is an N6-carboxylysine. Residue H294 is the Proton acceptor of the active site. Substrate contacts are provided by R295, H327, and S379.

This sequence belongs to the RuBisCO large chain family. Type I subfamily. Heterohexadecamer of 8 large chains and 8 small chains; disulfide-linked. The disulfide link is formed within the large subunit homodimers. It depends on Mg(2+) as a cofactor. Post-translationally, the disulfide bond which can form in the large chain dimeric partners within the hexadecamer appears to be associated with oxidative stress and protein turnover.

The protein resides in the plastid. Its subcellular location is the chloroplast. It carries out the reaction 2 (2R)-3-phosphoglycerate + 2 H(+) = D-ribulose 1,5-bisphosphate + CO2 + H2O. The catalysed reaction is D-ribulose 1,5-bisphosphate + O2 = 2-phosphoglycolate + (2R)-3-phosphoglycerate + 2 H(+). RuBisCO catalyzes two reactions: the carboxylation of D-ribulose 1,5-bisphosphate, the primary event in carbon dioxide fixation, as well as the oxidative fragmentation of the pentose substrate in the photorespiration process. Both reactions occur simultaneously and in competition at the same active site. The polypeptide is Ribulose bisphosphate carboxylase large chain (Phaseolus vulgaris (Kidney bean)).